Consider the following 496-residue polypeptide: Apolipoprotein N-acyltransferase (496 aa).

6 helical membrane-spanning segments follow: residues 23-43, 50-70, 84-104, 126-146, 171-191, and 205-225; these read GIAT…FILW, LANF…LYEL, LIIS…LVYL, LTIK…ILSQ, WIGA…IYLI, and FLFG…TNPI. The CN hydrolase domain occupies 236 to 464; it reads WQTNMPTREK…NDVVNPNFSI (229 aa). Glu-276 acts as the Proton acceptor in catalysis. Lys-325 is an active-site residue. Residue Cys-374 is the Nucleophile of the active site. Residues 476–496 form a helical membrane-spanning segment; that stretch reads PLFLLCLFLIGLNLYFGKFTN.

It belongs to the CN hydrolase family. Apolipoprotein N-acyltransferase subfamily.

The protein localises to the cell inner membrane. The catalysed reaction is N-terminal S-1,2-diacyl-sn-glyceryl-L-cysteinyl-[lipoprotein] + a glycerophospholipid = N-acyl-S-1,2-diacyl-sn-glyceryl-L-cysteinyl-[lipoprotein] + a 2-acyl-sn-glycero-3-phospholipid + H(+). It functions in the pathway protein modification; lipoprotein biosynthesis (N-acyl transfer). Catalyzes the phospholipid dependent N-acylation of the N-terminal cysteine of apolipoprotein, the last step in lipoprotein maturation. The protein is Apolipoprotein N-acyltransferase of Prochlorococcus marinus subsp. pastoris (strain CCMP1986 / NIES-2087 / MED4).